We begin with the raw amino-acid sequence, 319 residues long: tRNA dimethylallyltransferase (319 aa).

An ATP-binding site is contributed by 16 to 23; that stretch reads GPTASGKS. 18–23 lines the substrate pocket; it reads TASGKS. Positions 46–49 are interaction with substrate tRNA; it reads DSMV.

It belongs to the IPP transferase family. In terms of assembly, monomer. Mg(2+) is required as a cofactor.

It carries out the reaction adenosine(37) in tRNA + dimethylallyl diphosphate = N(6)-dimethylallyladenosine(37) in tRNA + diphosphate. Functionally, catalyzes the transfer of a dimethylallyl group onto the adenine at position 37 in tRNAs that read codons beginning with uridine, leading to the formation of N6-(dimethylallyl)adenosine (i(6)A). The protein is tRNA dimethylallyltransferase of Cutibacterium acnes (strain DSM 16379 / KPA171202) (Propionibacterium acnes).